The primary structure comprises 502 residues: Glycerol kinase (502 aa).

T14 serves as a coordination point for ADP. ATP contacts are provided by T14, T15, and S16. T14 contacts sn-glycerol 3-phosphate. R18 contributes to the ADP binding site. 4 residues coordinate sn-glycerol 3-phosphate: R84, E85, Y136, and D246. Residues R84, E85, Y136, D246, and Q247 each coordinate glycerol. T268 and G311 together coordinate ADP. Residues T268, G311, Q315, and G412 each contribute to the ATP site. Positions 412 and 416 each coordinate ADP.

Belongs to the FGGY kinase family. As to quaternary structure, homotetramer and homodimer (in equilibrium). Heterodimer with EIIA-Glc. Binds 1 zinc ion per glycerol kinase EIIA-Glc dimer. The zinc ion is important for dimerization.

The enzyme catalyses glycerol + ATP = sn-glycerol 3-phosphate + ADP + H(+). It participates in polyol metabolism; glycerol degradation via glycerol kinase pathway; sn-glycerol 3-phosphate from glycerol: step 1/1. With respect to regulation, activity of this regulatory enzyme is affected by several metabolites. Allosterically and non-competitively inhibited by fructose 1,6-bisphosphate (FBP) and unphosphorylated phosphocarrier protein EIIA-Glc (III-Glc), an integral component of the bacterial phosphotransferase (PTS) system. In terms of biological role, key enzyme in the regulation of glycerol uptake and metabolism. Catalyzes the phosphorylation of glycerol to yield sn-glycerol 3-phosphate. This Salmonella arizonae (strain ATCC BAA-731 / CDC346-86 / RSK2980) protein is Glycerol kinase.